The sequence spans 393 residues: Bifunctional enzyme Fae/Hps (393 aa).

Residues 1-161 (MYQIGEALVG…YEKDRGAHAV (161 aa)) are formaldehyde-activating enzyme. Residue histidine 17 is the Proton donor of the active site. 5 residues coordinate substrate: aspartate 19, leucine 48, lysine 66, threonine 68, and glutamine 83. The tract at residues 162 to 393 (MGFKVQRLWD…IDQFRVMTDF (232 aa)) is 3-hexulose-6-phosphate synthase.

It in the N-terminal section; belongs to the formaldehyde-activating enzyme family. The protein in the C-terminal section; belongs to the HPS/KGPDC family. HPS subfamily.

It catalyses the reaction 5,6,7,8-tetrahydromethanopterin + formaldehyde = 5,10-methylenetetrahydromethanopterin + H2O. The enzyme catalyses D-ribulose 5-phosphate + formaldehyde = D-arabino-hex-3-ulose 6-phosphate. Its pathway is carbohydrate biosynthesis; D-ribose 5-phosphate biosynthesis. Its function is as follows. Catalyzes the condensation of formaldehyde with tetrahydromethanopterin (H(4)MPT) to 5,10-methylenetetrahydromethanopterin. Functionally, catalyzes the reversible formation of ribulose-5-phosphate and formaldehyde from 3-hexulose-6-phosphate. This chain is Bifunctional enzyme Fae/Hps, found in Methanosphaerula palustris (strain ATCC BAA-1556 / DSM 19958 / E1-9c).